The following is a 238-amino-acid chain: Aspartate/glutamate leucyltransferase (238 aa).

The protein belongs to the R-transferase family. Bpt subfamily.

It localises to the cytoplasm. The catalysed reaction is N-terminal L-glutamyl-[protein] + L-leucyl-tRNA(Leu) = N-terminal L-leucyl-L-glutamyl-[protein] + tRNA(Leu) + H(+). It catalyses the reaction N-terminal L-aspartyl-[protein] + L-leucyl-tRNA(Leu) = N-terminal L-leucyl-L-aspartyl-[protein] + tRNA(Leu) + H(+). Its function is as follows. Functions in the N-end rule pathway of protein degradation where it conjugates Leu from its aminoacyl-tRNA to the N-termini of proteins containing an N-terminal aspartate or glutamate. In Shewanella sp. (strain ANA-3), this protein is Aspartate/glutamate leucyltransferase.